Reading from the N-terminus, the 1014-residue chain is Klotho (1014 aa).

The first 35 residues, 1–35 (MPASAPPRRPRPPPPSLSLSLLLVLLGLAGRRLRA), serve as a signal peptide directing secretion. Over 36–983 (EPGDGAQTWA…ECSFFHTRKP (948 aa)) the chain is Extracellular. Glycosyl hydrolase-1 regions lie at residues 59-508 (FQGT…KNGF) and 517-955 (LEGT…SNGF). 6 N-linked (GlcNAc...) asparagine glycosylation sites follow: Asn161, Asn285, Asn346, Asn609, Asn614, and Asn696. Residues 984 to 1004 (LVAFIAFLFFAFIVSLSLIFY) traverse the membrane as a helical segment. At 1005–1014 (YSKKGRRRYQ) the chain is on the cytoplasmic side.

It belongs to the glycosyl hydrolase 1 family. Klotho subfamily. Homodimer. Interacts with FGF23 and FGFR1.

It is found in the cell membrane. Its subcellular location is the apical cell membrane. The protein resides in the secreted. It catalyses the reaction a beta-D-glucuronoside + H2O = D-glucuronate + an alcohol. Its function is as follows. May have weak glycosidase activity towards glucuronylated steroids. However, it lacks essential active site Glu residues at positions 241 and 874, suggesting it may be inactive as a glycosidase in vivo. May be involved in the regulation of calcium and phosphorus homeostasis by inhibiting the synthesis of active vitamin D. Essential factor for the specific interaction between FGF23 and FGFR1. In terms of biological role, the Klotho peptide generated by cleavage of the membrane-bound isoform may be an anti-aging circulating hormone which would extend life span by inhibiting insulin/IGF1 signaling. The chain is Klotho (KL) from Macaca fascicularis (Crab-eating macaque).